A 313-amino-acid chain; its full sequence is Aspartate carbamoyltransferase catalytic subunit (313 aa).

Positions 58 and 59 each coordinate carbamoyl phosphate. An L-aspartate-binding site is contributed by K86. The carbamoyl phosphate site is built by R108, H136, and Q139. L-aspartate contacts are provided by R169 and R223. The carbamoyl phosphate site is built by G265 and P266.

Belongs to the aspartate/ornithine carbamoyltransferase superfamily. ATCase family. As to quaternary structure, heterododecamer (2C3:3R2) of six catalytic PyrB chains organized as two trimers (C3), and six regulatory PyrI chains organized as three dimers (R2).

It carries out the reaction carbamoyl phosphate + L-aspartate = N-carbamoyl-L-aspartate + phosphate + H(+). Its pathway is pyrimidine metabolism; UMP biosynthesis via de novo pathway; (S)-dihydroorotate from bicarbonate: step 2/3. Functionally, catalyzes the condensation of carbamoyl phosphate and aspartate to form carbamoyl aspartate and inorganic phosphate, the committed step in the de novo pyrimidine nucleotide biosynthesis pathway. The protein is Aspartate carbamoyltransferase catalytic subunit of Anaeromyxobacter dehalogenans (strain 2CP-C).